The primary structure comprises 1512 residues: MAAPDAMTSLVKSSVALLSSAHESLPTSLAAMKTAETAPSSTFGILGRVILSILSVLPTLLFWVSYTLPTWLFTLFSMSLTFTMNFTTLMLVLVFVVSTISYFVRYRYLTMYARLPPEPQREEPQVEVFPESQEGDSKRGLSNYLDEFLSAIKVFGYLERPVFHELTRTMQTRRLAAGETILLEEEKGFCLVVDGLVQIFVKSNREESDSDEDDGELQGESGGGSAQAHRQGYQLLTEVKNGAPMSSLFSILSLFTEDVKLRHDEDSGPSSSTPMSPQHRPSMTRNSSFNMDDSRPETPIEAQEATIRRRRTSALASPTAGGRLSNVPPLSLDTDGFNDNFKHSKQRRSPSRSTKPKSAHPDIVARATVDTTIAIIPATAFRRLTRIYPKATAHIVQVILTRLQRVTLATSHAYLSLTNEVLRTEKLMNKYTTYDLPGFLRDAPLERLKEKFTKETERLGSDEGMKGIALHNPGAGRRRRTSVSIRSSTAAQARLAAARGTSIGSNVEAISRLTSPEQGMRNDRISAGDLLTNTQMSRGTGRSGRSSFSQPYQHDVRRDARTPLDASGFNPFASPSMRPNLHRQESIDEATVFRESVLGCMFKAIGLTSPENPVPRPAASVEQSPRLVSFDAKRQKAIFTSAFGFMDPYEASRDGDADSVASASNLSTLSASGNGNLLEEVVNDVEIVFFPKDAVLVEQGERNPGLYYVIDGFLDVSVAVEEDSSESNVLGTLPTGPAVTEDDLFGPPLQPTATNTSLRNGENSKKKRSRKSLFMTRPGGLAGYLGTVSSNRSFVDVTAKTDVYVGFLPRASIERIVERYPVVLLTMAKRLTTLLPRLIQHIDFALEWVQVNAGQVIYNQGEESDAIYIVLNGRLRAIKDAENGKVTVIGEYGQGDSVGELEVLTETARPGSLHAIRDTELAKFPKTLFNSLALEHPGITIKISKIIASRMRALVDDPLHEQSKERSNKATRTNVSSTVNLRTVAILPVTAGIPVVDFASRLMNALNQIGVPRGVVSLNQAAILNHLGRHAFNRMGKLKLSQYLADLEEKYGMVLYVADTPVKSPWTQTCISQADCILLVGLAESSPNIGEYERFLLTTKTTARKELVLLHAERYCPSGLTRKWLRNWPWINGSHHHMQMSFRATAEPVHQTGRRLGNAIKQRVQVIQAEIQKYTSKRVRQTPLYSADTPFKGDFHRLARRLCGKSVGLVLGGGGARGISQIGIIRALEEAGIPIDIVGGTSIGSFIGALYAWDADVVPMYGRAKKFSGRMGSMWRFALDLTYPSASYTTGHEFNRGIFKTFGNSQIEDFWLEFYCNTTNISKSRSEIHTSGYVWRYVRASMSLAGLLPPLCDNGSMLLDGGYIDNLTVAHMKSLGADVIFAIDVGSLDEDTPQAFGDSLSGFWATFNRWNPFSTHANPPTLSEIQSRLAYVSSIDALERAKNTPGCRYMRPPIDPYGTLDFAKFEEIYEVGYKYGKGFLAQLREQGVLPVTEETEKEKNLRRTMAPRRASI.

The Cytoplasmic portion of the chain corresponds to 1 to 48 (MAAPDAMTSLVKSSVALLSSAHESLPTSLAAMKTAETAPSSTFGILGR). A helical transmembrane segment spans residues 49 to 69 (VILSILSVLPTLLFWVSYTLP). Residues 70-83 (TWLFTLFSMSLTFT) lie on the Lumenal side of the membrane. A helical transmembrane segment spans residues 84–104 (MNFTTLMLVLVFVVSTISYFV). Topologically, residues 105–1512 (RYRYLTMYAR…RTMAPRRASI (1408 aa)) are cytoplasmic. 4 disordered regions span residues 204–230 (NREESDSDEDDGELQGESGGGSAQAHR), 262–362 (RHDE…AHPD), 534–556 (TQMSRGTGRSGRSSFSQPYQHDV), and 740–770 (TEDDLFGPPLQPTATNTSLRNGENSKKKRSR). Over residues 208–217 (SDSDEDDGEL) the composition is skewed to acidic residues. Over residues 268–291 (GPSSSTPMSPQHRPSMTRNSSFNM) the composition is skewed to polar residues. Over residues 343–358 (HSKQRRSPSRSTKPKS) the composition is skewed to basic residues. Over residues 537-549 (SRGTGRSGRSSFS) the composition is skewed to low complexity. A nucleoside 3',5'-cyclic phosphate contacts are provided by residues 669–793 (LSAS…SNRS) and 830–950 (RLTT…IASR). The segment covering 751 to 761 (PTATNTSLRNG) has biased composition (polar residues). Positions 1209 to 1373 (LVLGGGGARG…IDNLTVAHMK (165 aa)) constitute a PNPLA domain. The GXGXXG motif lies at 1213 to 1218 (GGGARG). A GXSXG motif is present at residues 1240–1244 (GTSIG). Catalysis depends on Ser1242, which acts as the Nucleophile. Asp1360 serves as the catalytic Proton acceptor. Positions 1360-1362 (DGG) match the DGA/G motif.

Belongs to the NTE family.

It is found in the endoplasmic reticulum membrane. The catalysed reaction is a 1-acyl-sn-glycero-3-phosphocholine + H2O = sn-glycerol 3-phosphocholine + a fatty acid + H(+). With respect to regulation, inhibited by organophosphorus esters. Its function is as follows. Intracellular phospholipase B that catalyzes the double deacylation of phosphatidylcholine (PC) to glycerophosphocholine (GroPCho). Plays an important role in membrane lipid homeostasis. Responsible for the rapid PC turnover in response to inositol, elevated temperatures, or when choline is present in the growth medium. The sequence is that of Lysophospholipase NTE1 (NTE1) from Phaeosphaeria nodorum (strain SN15 / ATCC MYA-4574 / FGSC 10173) (Glume blotch fungus).